A 1189-amino-acid polypeptide reads, in one-letter code: MAEEDYLPVYQLRRDSSLLGTMNKILVANRGEIPIRIFRTAHELSMNTVAIYSHEDRLSMHRLKADEAYVIGERGQYSPVQAYLAIDEIIKIAVKHNVNMIHPGYGFCSENSEFARKVEENGILWVGPSDTVIDAVGDKVSARNLAYAANVPTVPGTPGPIEDVAQATAFVEEYGYPVIIKAAFGGGGRGMRVVREGDDIEDAFLRASSEAKTAFGNGTVFIERFLDKPKHIEVQLLADNYGNVIHLFERDCSVQRRHQKVARNCSAKTLPVEVRNAILNDAVKLAKTANYRNAGTAEFLVDSQNRHYFIEINPRIQVEHTITEEITGVDIVAAQIQIAAGASLEQLGLLQEKITTRGFAIQCRITTEDPTKNFQPDTGKIEVYRSSGGNGVRLDGGNGFAGAVISPHYDSMLVKCSTSGSNYEIRRRKMIRALVEFRIRGVKTNIPFLLALLTHPVFMTSECWTTFIDDTPELFKILTSQNRAQKLLAYLGDLAVNGSSIKGQIGLPKLHKEADIPSITDINGDVIDVSIPPPDGWRQFLLEKGPEQFAQQVRAFPGLMIMDTTWRDAHQSLLATRVRTHDLLNIAPATSYALHHAFALECWGGATFDVSMRFLHEDPWQRLRKLRKAVPNIPFSMLLRGGNGVAYYSLPDNAIDHFLKQAKDTGVDVFRVFDALNDIEQLKVGVDAVKKAGGVVEATMCYSGDMLKPGKKYNLEYYINLATEIVEMGTHILAVKDMAGTLKPTAAKQLISALRRKFPSLPIHVHTHDSAGTGVASMVACARAGADVVTVRVNSMSGMTSQPSMSAFIASLDGEIETGIPEANAREIDAYWAEMRLLYSCFEADLKGPDPEVYQHEIPGGQLTNLLFQAQQVGLGEKWVETKKAYEAANRLLGDIVKVTPTSKVVGDLAQFMVSNKLSSEDVERLASELDFPDSVLDFFEGLMGTPYGGFPEPLRTNVISGKRRKLTSRPGLTLEPYNIPAIREDLEARFSKVTENDVASYNMYPKVYEAYKKQQELYGDLSVLPTRNFLSPPKIDEERHVTIVTIETRKTLIIKCMAEGELSQSSGTREVYFELNGEMRKVTVEDKNGAVETITRPKADAHNPNEIGAPMAGVVVEVRVHENGEVKKGDPIAVLSAMKMEMVISSPVAGRIGQIAVKENDSVDASDLIPKSSRLSKLLMFIILIILY.

The Biotin carboxylation domain occupies 21–473; that stretch reads TMNKILVANR…WTTFIDDTPE (453 aa). Residues K139, E223, and H258 each coordinate ATP. The region spanning 143–340 is the ATP-grasp domain; that stretch reads RNLAYAANVP…IVAAQIQIAA (198 aa). Residue R315 is part of the active site. In terms of domain architecture, Pyruvate carboxyltransferase spans 559 to 826; that stretch reads LMIMDTTWRD…ETGIPEANAR (268 aa). Substrate-binding positions include 567–571 and R640; that span reads RDAHQ. A divalent metal cation is bound at residue D568. Residues K736, H766, and H768 each coordinate a divalent metal cation. N6-carboxylysine is present on K736. Substrate is bound at residue T900. Residues 1099–1174 form the Biotinyl-binding domain; the sequence is KADAHNPNEI…DASDLIPKSS (76 aa). At K1140 the chain carries N6-biotinyllysine.

It depends on biotin as a cofactor. Requires Zn(2+) as cofactor.

It is found in the cytoplasm. The enzyme catalyses hydrogencarbonate + pyruvate + ATP = oxaloacetate + ADP + phosphate + H(+). Its pathway is carbohydrate biosynthesis; gluconeogenesis. In terms of biological role, pyruvate carboxylase catalyzes a 2-step reaction, involving the ATP-dependent carboxylation of the covalently attached biotin in the first step and the transfer of the carboxyl group to pyruvate in the second. This chain is Pyruvate carboxylase (PYC1), found in Komagataella pastoris (Yeast).